A 339-amino-acid polypeptide reads, in one-letter code: Ornithine utilization regulator (339 aa).

One can recognise an HTH araC/xylS-type domain in the interval 241-338 (TRVRRLLLAR…GKLPSDYREA (98 aa)). 2 consecutive DNA-binding regions (H-T-H motif) follow at residues 258-279 (EQAA…SSLG) and 305-328 (LYEI…RKWT).

In terms of biological role, probably activates the ArgJ gene that encodes ornithine acetyltransferase. Binds to its own promoter-operator region. Probably binds ornithine. The sequence is that of Ornithine utilization regulator (oruR) from Pseudomonas aeruginosa (strain ATCC 15692 / DSM 22644 / CIP 104116 / JCM 14847 / LMG 12228 / 1C / PRS 101 / PAO1).